Here is a 182-residue protein sequence, read N- to C-terminus: Glycoprotein Q2 (182 aa).

The N-terminal stretch at 1–20 is a signal peptide; it reads MHFVAVYILTHFHAYPGVAA. Residues N74 and N110 are each glycosylated (N-linked (GlcNAc...) asparagine; by host).

Interacts with isoform gQ2. The heterodimer gQ1-gQ2 associates with the glycoprotein complex gH-gL to form a tetrameric complex. The gH/gL/gQ1/gQ2 complex binds to host TNFRSF4. Glycosylated by host.

Its subcellular location is the virion membrane. It is found in the host endoplasmic reticulum-Golgi intermediate compartment. Plays a role in virus entry by participating in host receptor binding at the cell surface. This chain is Glycoprotein Q2, found in Human herpesvirus 6B (strain Z29) (HHV-6 variant B).